Reading from the N-terminus, the 219-residue chain is Cytidylate kinase (219 aa).

15-23 (GPAASGKGT) serves as a coordination point for ATP.

Belongs to the cytidylate kinase family. Type 1 subfamily.

The protein localises to the cytoplasm. The enzyme catalyses CMP + ATP = CDP + ADP. The catalysed reaction is dCMP + ATP = dCDP + ADP. The polypeptide is Cytidylate kinase (Brucella abortus (strain S19)).